A 212-amino-acid chain; its full sequence is Uracil phosphoribosyltransferase (212 aa).

5-phospho-alpha-D-ribose 1-diphosphate contacts are provided by residues Arg-78, Arg-103, and 130-138; that span reads DPMLATGSS. Uracil contacts are provided by residues Ile-193 and 198–200; that span reads GDA. Asp-199 contributes to the 5-phospho-alpha-D-ribose 1-diphosphate binding site.

This sequence belongs to the UPRTase family. Requires Mg(2+) as cofactor.

It catalyses the reaction UMP + diphosphate = 5-phospho-alpha-D-ribose 1-diphosphate + uracil. The protein operates within pyrimidine metabolism; UMP biosynthesis via salvage pathway; UMP from uracil: step 1/1. With respect to regulation, allosterically activated by GTP. In terms of biological role, catalyzes the conversion of uracil and 5-phospho-alpha-D-ribose 1-diphosphate (PRPP) to UMP and diphosphate. The polypeptide is Uracil phosphoribosyltransferase (Pseudomonas fluorescens (strain SBW25)).